We begin with the raw amino-acid sequence, 891 residues long: Protein translocase subunit SecA 1 (891 aa).

Residues glutamine 86, 104–108 (GEGKT), and aspartate 493 contribute to the ATP site. The span at 845 to 873 (KQVAKPIEASHGDGNRKKAPVVKEKEAGR) shows a compositional bias: basic and acidic residues. The disordered stretch occupies residues 845 to 891 (KQVAKPIEASHGDGNRKKAPVVKEKEAGRNDPCPCGSGKKYKKCCGE). 4 residues coordinate Zn(2+): cysteine 877, cysteine 879, cysteine 888, and cysteine 889.

Belongs to the SecA family. As to quaternary structure, monomer and homodimer. Part of the essential Sec protein translocation apparatus which comprises SecA, SecYEG and auxiliary proteins SecDF. Other proteins may also be involved. The cofactor is Zn(2+).

The protein localises to the cell membrane. It localises to the cytoplasm. It carries out the reaction ATP + H2O + cellular proteinSide 1 = ADP + phosphate + cellular proteinSide 2.. Functionally, part of the Sec protein translocase complex. Interacts with the SecYEG preprotein conducting channel. Has a central role in coupling the hydrolysis of ATP to the transfer of proteins into and across the cell membrane, serving as an ATP-driven molecular motor driving the stepwise translocation of polypeptide chains across the membrane. In Alkaliphilus metalliredigens (strain QYMF), this protein is Protein translocase subunit SecA 1.